Reading from the N-terminus, the 439-residue chain is Chitinase-like protein Idgf1 (439 aa).

The signal sequence occupies residues 1–20 (MRFQLFYILGLLSVTSLTHA). The 418-residue stretch at 22–439 (SNLICYYDSN…ILRSIKYFMG (418 aa)) folds into the GH18 domain. An intrachain disulfide couples Cys26 to Cys53. N-linked (GlcNAc...) asparagine glycans are attached at residues Asn122, Asn218, and Asn346. Cys340 and Cys423 are oxidised to a cystine.

Belongs to the glycosyl hydrolase 18 family. IDGF subfamily. In terms of tissue distribution, primarily expressed in yolk cells and fat body. In larvae, it is expressed in large salivary gland cells and weakly expressed in imaginal disks. Less expressed than Idgf2 and Idgf4.

It is found in the secreted. Functionally, cooperates with insulin-like peptides to stimulate the proliferation, polarization and motility of imaginal disk cells. May act by stabilizing the binding of insulin-like peptides to its receptor through a simultaneous interaction with both molecules to form a multiprotein signaling complex. The sequence is that of Chitinase-like protein Idgf1 (Idgf1) from Drosophila melanogaster (Fruit fly).